Here is a 336-residue protein sequence, read N- to C-terminus: Probable tRNA N6-adenosine threonylcarbamoyltransferase (336 aa).

Positions 110, 114, and 131 each coordinate a divalent metal cation. Residues 131–135 (YVSGG), Asp-163, Gly-178, Glu-182, and Asn-267 each bind substrate. Residue Asp-295 participates in a divalent metal cation binding.

The protein belongs to the KAE1 / TsaD family. Component of the EKC/KEOPS complex; the whole complex dimerizes. The cofactor is a divalent metal cation.

The protein resides in the cytoplasm. The protein localises to the nucleus. It carries out the reaction L-threonylcarbamoyladenylate + adenosine(37) in tRNA = N(6)-L-threonylcarbamoyladenosine(37) in tRNA + AMP + H(+). Component of the EKC/KEOPS complex that is required for the formation of a threonylcarbamoyl group on adenosine at position 37 (t(6)A37) in tRNAs that read codons beginning with adenine. The complex is probably involved in the transfer of the threonylcarbamoyl moiety of threonylcarbamoyl-AMP (TC-AMP) to the N6 group of A37. Osgep likely plays a direct catalytic role in this reaction, but requires other protein(s) of the complex to fulfill this activity. This chain is Probable tRNA N6-adenosine threonylcarbamoyltransferase, found in Dictyostelium discoideum (Social amoeba).